Consider the following 298-residue polypeptide: Inosose dehydratase (298 aa).

It belongs to the IolE/MocC family. Requires glutathione as cofactor. Co(2+) is required as a cofactor. It depends on Mn(2+) as a cofactor.

The catalysed reaction is scyllo-inosose = 3D-3,5/4-trihydroxycyclohexane-1,2-dione + H2O. Its pathway is polyol metabolism; myo-inositol degradation into acetyl-CoA; acetyl-CoA from myo-inositol: step 2/7. Functionally, catalyzes the dehydration of inosose (2-keto-myo-inositol, 2KMI or 2,4,6/3,5-pentahydroxycyclohexanone) to 3D-(3,5/4)-trihydroxycyclohexane-1,2-dione (D-2,3-diketo-4-deoxy-epi-inositol). The polypeptide is Inosose dehydratase (Clostridium beijerinckii (strain ATCC 51743 / NCIMB 8052) (Clostridium acetobutylicum)).